The primary structure comprises 276 residues: Undecaprenyl-diphosphatase (276 aa).

Helical transmembrane passes span 1–21, 39–59, 84–104, 115–135, 159–179, 188–208, 222–242, and 253–273; these read MSWLQVIVLSIVQGLTEFLPV, AGASFTAVTQLGTEFAVLIYF, YRLGWFVIVGTIPIGVFGLLF, LWLVATALIVFSVVIAAAEYY, LALMPGVSRSGATISAGLFLG, FGFLLAIPAVLASGLFSLPDA, QLIVATVIAFVVGFAAIAWFL, and FVGYRVVLGVVVLALLGTGVL.

The protein belongs to the UppP family.

Its subcellular location is the cell membrane. It catalyses the reaction di-trans,octa-cis-undecaprenyl diphosphate + H2O = di-trans,octa-cis-undecaprenyl phosphate + phosphate + H(+). Functionally, catalyzes the dephosphorylation of undecaprenyl diphosphate (UPP). Confers resistance to bacitracin. The polypeptide is Undecaprenyl-diphosphatase (Mycolicibacterium smegmatis (strain ATCC 700084 / mc(2)155) (Mycobacterium smegmatis)).